Consider the following 170-residue polypeptide: Ribosomal RNA small subunit methyltransferase G (170 aa).

S-adenosyl-L-methionine is bound by residues Gly-70, Leu-75, 120–121 (AE), and Arg-138.

It belongs to the methyltransferase superfamily. RNA methyltransferase RsmG family.

The protein resides in the cytoplasm. Functionally, specifically methylates the N7 position of guanine in position 518 of 16S rRNA. This is Ribosomal RNA small subunit methyltransferase G from Mycobacterium ulcerans (strain Agy99).